The chain runs to 301 residues: Putative S-adenosyl-L-methionine-dependent methyltransferase BCG_0775c (301 aa).

Residues Asp-130 and 159–160 (DL) contribute to the S-adenosyl-L-methionine site.

Belongs to the UPF0677 family.

Its function is as follows. Exhibits S-adenosyl-L-methionine-dependent methyltransferase activity. The sequence is that of Putative S-adenosyl-L-methionine-dependent methyltransferase BCG_0775c from Mycobacterium bovis (strain BCG / Pasteur 1173P2).